A 241-amino-acid chain; its full sequence is Fatty acid metabolism regulator protein (241 aa).

In terms of domain architecture, HTH gntR-type spans 11–79 (QSPAGLAEEY…HGKPTKVNNI (69 aa)). A DNA-binding region (H-T-H motif) is located at residues 39-58 (ERELAEKIGVTRTTLREVLQ).

Homodimer.

It localises to the cytoplasm. Functionally, multifunctional regulator of fatty acid metabolism. This Pasteurella multocida (strain Pm70) protein is Fatty acid metabolism regulator protein.